The chain runs to 127 residues: Small ribosomal subunit protein uS11 (127 aa).

This sequence belongs to the universal ribosomal protein uS11 family. In terms of assembly, part of the 30S ribosomal subunit. Interacts with proteins S7 and S18. Binds to IF-3.

Its function is as follows. Located on the platform of the 30S subunit, it bridges several disparate RNA helices of the 16S rRNA. Forms part of the Shine-Dalgarno cleft in the 70S ribosome. This is Small ribosomal subunit protein uS11 from Chlorobium phaeobacteroides (strain DSM 266 / SMG 266 / 2430).